The chain runs to 246 residues: Dof zinc finger protein DOF4.7 (246 aa).

Composition is skewed to polar residues over residues 1–12 (MMTSSHQSNTTG) and 27–37 (QINNKEPSPAT). Residues 1-39 (MMTSSHQSNTTGFKPRRIKTTAKPPRQINNKEPSPATQP) form a disordered region. A Dof-type zinc finger spans residues 41–95 (LKCPRCDSVNTKFCYYNNYSLSQPRHYCKNCRRYWTRGGALRNVPIGGSTRNKNK). 4 residues coordinate Zn(2+): cysteine 43, cysteine 46, cysteine 68, and cysteine 71. The segment at 216–235 (GGATSGNHEDNDDGEGNLGN) is disordered.

As to quaternary structure, interacts with ZFP2. As to expression, highly expressed at the base of all organs of the flower, especially in the abscission zone (AZ) of petals, stamens and sepals. Expressed at low levels in sepals, filaments, stigmatic papillae, tips of young siliques, and at the base of pedicels and leaf trichomes.

It is found in the nucleus. Its function is as follows. Transcription factor that binds specifically to a 5'-AA[AG]G-3' consensus core sequence. Involved in the negative regulation of floral organ abscission by binding to the typical DOF 5'-AAAG-3' sequences in the promoter of ADPG2/PGAZAT, and by down-regulating its expression. ADPG2/PGAZAT is an abscission-related and cell wall hydrolyzing polygalacturonase. May act through the interaction with ZFP2, an abscission-related transcription factor. The polypeptide is Dof zinc finger protein DOF4.7 (Arabidopsis thaliana (Mouse-ear cress)).